The sequence spans 258 residues: Bidirectional sugar transporter SWEET9 (258 aa).

At 1 to 7 (MFLKVHE) the chain is on the extracellular side. Residues 8–28 (IAFLFGLLGNIVSFGVFLSPV) form a helical membrane-spanning segment. A MtN3/slv 1 domain is found at 10-96 (FLFGLLGNIV…FLYILYAPRE (87 aa)). Over 29-42 (PTFYGIYKKKSSKG) the chain is Cytoplasmic. A helical membrane pass occupies residues 43–63 (FQSIPYICALASATLLLYYGI). Residues 64-69 (MKTHAY) lie on the Extracellular side of the membrane. Residues 70-90 (LIISINTFGCFIEISYLFLYI) form a helical membrane-spanning segment. Topologically, residues 91 to 103 (LYAPREAKISTLK) are cytoplasmic. The chain crosses the membrane as a helical span at residues 104-124 (LIVICNIGGLGLLILLVNLLV). Over 125-131 (PKQHRVS) the chain is Extracellular. A helical transmembrane segment spans residues 132 to 152 (TVGWVCAAYSLAVFASPLSVM). One can recognise a MtN3/slv 2 domain in the interval 132–216 (TVGWVCAAYS…ILYMMYQGST (85 aa)). Over 153-165 (RKVIKTKSVEYMP) the chain is Cytoplasmic. The chain crosses the membrane as a helical span at residues 166-186 (FLLSLSLTLNAVMWFFYGLLI). The Extracellular portion of the chain corresponds to 187–189 (KDK). A helical membrane pass occupies residues 190-210 (FIAMPNILGFLFGVAQMILYM). Over 211–258 (MYQGSTKTDLPTENQLANKTDVNEVPIVAVELPDVGSDNVEGSVRPMK) the chain is Cytoplasmic.

It belongs to the SWEET sugar transporter family. In terms of assembly, forms heterooligomers with SWEET1, SWEET5, SWEET8, SWEET11, SWEET13, SWEET16 and SWEET17. As to expression, specifically expressed in nectaries, mostly in the lower half of nectary parenchyma.

It localises to the cell membrane. The protein localises to the cytoplasmic vesicle membrane. Its subcellular location is the golgi apparatus. It is found in the trans-Golgi network membrane. Its function is as follows. Mediates both low-affinity uptake and efflux of sugar across the plasma membrane. Nectary-specific sugar transporter required for nectar production by mediating the secretion of sucrose from the nectary parenchyma to the extracellular space. This chain is Bidirectional sugar transporter SWEET9, found in Arabidopsis thaliana (Mouse-ear cress).